A 157-amino-acid chain; its full sequence is C-type lectin 9a (157 aa).

Positions 1–23 are cleaved as a signal peptide; sequence MGRFIFVSFGLLVVFLSLSGTGA. Cystine bridges form between Cys27/Cys38, Cys55/Cys151, and Cys126/Cys143. The region spanning 34 to 152 is the C-type lectin domain; sequence YDQYCYKPFN…CQAKKPFVCK (119 aa).

Belongs to the snaclec family. As to quaternary structure, heteromultimer; disulfide-linked. Expressed by the venom gland.

Its subcellular location is the secreted. In terms of biological role, interferes with one step of hemostasis (modulation of platelet aggregation, or coagulation cascade, for example). This Crotalus adamanteus (Eastern diamondback rattlesnake) protein is C-type lectin 9a.